The following is a 402-amino-acid chain: MNCVLTEARLVTMQPGVQGYQITEPQTLIIEQGRIQHIGQHIDLPSDAHPISCAGKLVTPGLIDCHTHLVYAGSRANEFELRLQGVPYQTIAAQGGGILSTVNATRKASEEALIELALPRLDGLLRSGVTSVEVKSGYGLTLKDELKMLRAAKALEQHRRVKITTTLLAAHALPPEFQGRSDDYIAHICQEIIPRVAEEQLATSVDVFCESIGFSVAQTERVFHAAQAHGLQIKGHTEQLSNLGGSALTARMGGLSVDHIEYLDEAGVKALAQSSTVATLLPGAFYFLRETQKPPIEWLRQYRVPMAISTDLNPGTSPFADLSLMMNMGCTLFDLTPEETLRAVTCHAAQALGYPANRGQIAEGYDADLAIWNIEHPAELSYQVGVSRLHARIVNGELSYES.

The Fe(3+) site is built by His-66 and His-68. Zn(2+) contacts are provided by His-66 and His-68. 4-imidazolone-5-propanoate is bound by residues Arg-75, Tyr-138, and His-171. Tyr-138 lines the N-formimidoyl-L-glutamate pocket. His-236 provides a ligand contact to Fe(3+). His-236 lines the Zn(2+) pocket. A 4-imidazolone-5-propanoate-binding site is contributed by Gln-239. Asp-311 is a Fe(3+) binding site. Position 311 (Asp-311) interacts with Zn(2+). N-formimidoyl-L-glutamate contacts are provided by Asn-313 and Gly-315. Thr-316 serves as a coordination point for 4-imidazolone-5-propanoate.

The protein belongs to the metallo-dependent hydrolases superfamily. HutI family. It depends on Zn(2+) as a cofactor. Fe(3+) serves as cofactor.

It localises to the cytoplasm. The catalysed reaction is 4-imidazolone-5-propanoate + H2O = N-formimidoyl-L-glutamate. Its pathway is amino-acid degradation; L-histidine degradation into L-glutamate; N-formimidoyl-L-glutamate from L-histidine: step 3/3. Functionally, catalyzes the hydrolytic cleavage of the carbon-nitrogen bond in imidazolone-5-propanoate to yield N-formimidoyl-L-glutamate. It is the third step in the universal histidine degradation pathway. This chain is Imidazolonepropionase, found in Vibrio cholerae serotype O1 (strain ATCC 39541 / Classical Ogawa 395 / O395).